Reading from the N-terminus, the 514-residue chain is Bifunctional purine biosynthesis protein PurH (514 aa).

The MGS-like domain maps to 1 to 146; that stretch reads MPPLALLSTS…KNFAHVTVLC (146 aa).

This sequence belongs to the PurH family.

The enzyme catalyses (6R)-10-formyltetrahydrofolate + 5-amino-1-(5-phospho-beta-D-ribosyl)imidazole-4-carboxamide = 5-formamido-1-(5-phospho-D-ribosyl)imidazole-4-carboxamide + (6S)-5,6,7,8-tetrahydrofolate. It carries out the reaction IMP + H2O = 5-formamido-1-(5-phospho-D-ribosyl)imidazole-4-carboxamide. Its pathway is purine metabolism; IMP biosynthesis via de novo pathway; 5-formamido-1-(5-phospho-D-ribosyl)imidazole-4-carboxamide from 5-amino-1-(5-phospho-D-ribosyl)imidazole-4-carboxamide (10-formyl THF route): step 1/1. It participates in purine metabolism; IMP biosynthesis via de novo pathway; IMP from 5-formamido-1-(5-phospho-D-ribosyl)imidazole-4-carboxamide: step 1/1. The polypeptide is Bifunctional purine biosynthesis protein PurH (Cyanothece sp. (strain PCC 7425 / ATCC 29141)).